A 344-amino-acid chain; its full sequence is Dihydroorotase (344 aa).

Zn(2+) is bound by residues histidine 14 and histidine 16. Substrate-binding positions include 16–18 (HFR) and asparagine 42. Lysine 100, histidine 137, and histidine 175 together coordinate Zn(2+). Residue lysine 100 is modified to N6-carboxylysine. Residue histidine 137 participates in substrate binding. Residue leucine 220 participates in substrate binding. Residue aspartate 248 coordinates Zn(2+). Aspartate 248 is a catalytic residue. Substrate is bound by residues histidine 252 and alanine 264.

Belongs to the metallo-dependent hydrolases superfamily. DHOase family. Class II DHOase subfamily. Homodimer. It depends on Zn(2+) as a cofactor.

It catalyses the reaction (S)-dihydroorotate + H2O = N-carbamoyl-L-aspartate + H(+). It participates in pyrimidine metabolism; UMP biosynthesis via de novo pathway; (S)-dihydroorotate from bicarbonate: step 3/3. Functionally, catalyzes the reversible cyclization of carbamoyl aspartate to dihydroorotate. This Erythrobacter litoralis (strain HTCC2594) protein is Dihydroorotase.